The chain runs to 476 residues: MVATAAATAELQVAKDYVIADIGLADFGRKELNIAETEMPGLMALRAKYGKDKPLKGARIAGSLHMTIQTAVLIETLVELGADVRWASCNIFSTQDHAAAAMAAGGIPVFAVKGETLEEYWDYTHSILEWGDGGTPNMILDDGGDATGLVMLGSKAEQDITVLDNPSNEEETFLFASIKKKLAKDSSFYSRIKAEIQGVTEETTTGVARLYKMQKSGELPFPAINVNDSVTKSKFDNLYGCRESLVDSIKRATDVMVAGKQALVVGYGDVGKGSAQSLRGLGATVCIAEVDPICALQAAMEGYRVVRLEDVVDQMDIFVTATGNYQVIRNEHLVKMKDEAIVCNIGHFDNEIDVASLKSYEWDNIKPQVDHITLPSGNKIILLAEGRLVNLGCATGHPSFVMSNSFTNQVLAQIELFTKGSEYGKEVYVLPKHLDEMVARLHLEKIGCKLTELSKDQADYINVPVEGPYKPDHYRY.

Substrate-binding residues include threonine 67, aspartate 142, and glutamate 202. An NAD(+)-binding site is contributed by 203–205 (TTT). Residues lysine 232 and aspartate 236 each coordinate substrate. Residues asparagine 237, 266-271 (GYGDVG), glutamate 289, asparagine 324, 345-347 (IGH), and asparagine 390 each bind NAD(+).

It belongs to the adenosylhomocysteinase family. It depends on NAD(+) as a cofactor.

The protein localises to the cytoplasm. It carries out the reaction S-adenosyl-L-homocysteine + H2O = L-homocysteine + adenosine. Its pathway is amino-acid biosynthesis; L-homocysteine biosynthesis; L-homocysteine from S-adenosyl-L-homocysteine: step 1/1. Its function is as follows. May play a key role in the regulation of the intracellular concentration of adenosylhomocysteine. The protein is Adenosylhomocysteinase of Synechococcus sp. (strain CC9311).